We begin with the raw amino-acid sequence, 279 residues long: Energy-coupling factor transporter ATP-binding protein EcfA2 (279 aa).

Residues 3–245 (IALENVNFIY…VVFMEEVQLG (243 aa)) form the ABC transporter domain. 40-47 (GHTGSGKS) contacts ATP.

It belongs to the ABC transporter superfamily. Energy-coupling factor EcfA family. In terms of assembly, forms a stable energy-coupling factor (ECF) transporter complex composed of 2 membrane-embedded substrate-binding proteins (S component), 2 ATP-binding proteins (A component) and 2 transmembrane proteins (T component).

Its subcellular location is the cell membrane. Functionally, ATP-binding (A) component of a common energy-coupling factor (ECF) ABC-transporter complex. Unlike classic ABC transporters this ECF transporter provides the energy necessary to transport a number of different substrates. The protein is Energy-coupling factor transporter ATP-binding protein EcfA2 of Streptococcus pneumoniae serotype 2 (strain D39 / NCTC 7466).